Here is a 219-residue protein sequence, read N- to C-terminus: Leukocyte surface antigen CD53 (219 aa).

Over 1 to 11 (MGMSSLKLLKY) the chain is Cytoplasmic. The helical transmembrane segment at 12 to 32 (VLFFFNLLFWICGCCILGFGI) threads the bilayer. Topologically, residues 33-54 (YLLIHNNFGVLFHNLPSLTLGN) are extracellular. A helical transmembrane segment spans residues 55–69 (VFVIVGSIIMVVAFL). The Cytoplasmic portion of the chain corresponds to 70–80 (GCMGSIKENKC). Residues 81–106 (LLMSFFILLLIILLAEVTLAILLFVY) form a helical membrane-spanning segment. Topologically, residues 107–181 (EQKLNEYVAK…AKARLWFHSN (75 aa)) are extracellular. N-linked (GlcNAc...) asparagine glycosylation is found at Asn129 and Asn148. The helical transmembrane segment at 182 to 206 (FLYIGIITICVCVIEVLGMSFALTL) threads the bilayer. Residues 207–219 (NCQIDKTSQTIGL) lie on the Cytoplasmic side of the membrane.

Belongs to the tetraspanin (TM4SF) family. In terms of assembly, interacts with SCIMP. Interacts with CD45/PTPRC. Interacts with IL7R. Interacts with RBL2 and PPP2CA. B-cells, monocytes, macrophages, neutrophils, single (CD4 or CD8) positive thymocytes and peripheral T-cells.

The protein resides in the cell membrane. It is found in the cell junction. Its subcellular location is the membrane. The protein localises to the synapse. Its function is as follows. Structural component of specialized membrane microdomains known as tetraspanin-enriched microdomains (TERMs), which act as platforms for receptor clustering and signaling. Participates thereby in diverse biological functions such as cell signal transduction, adhesion, migration and protein trafficking. Plays a role in the activation of monocytes and B-cells. Acts as an essential regulator of B-cell development by promoting interleukin-7 receptor/IL7R signaling. Also promotes, in B-cells, the BCR signaling by recruiting PKC to the plasma membrane in order to phosphorylate its substrates. Plays an essential role in B- and T-cells homing to lymph nodes by stabilizing L-selectin/SELL cell surface expression. Also mediates metabolic and inflammatory functions in hepatocytes and adipose tissue by promoting TNF-alpha and LPS signaling independent of the immune compartment. The sequence is that of Leukocyte surface antigen CD53 (CD53) from Homo sapiens (Human).